We begin with the raw amino-acid sequence, 356 residues long: MESFVDEVAIEVFAGHGGAGSVHFRREKYVEFGGPDGGDGGIGGNVVIRPNLSMYTLDKYLSKRKFKAQAGFPGVGDNCSGKKGEDLVLFVPLGTQIYDEETGDLLFDFVSDSQEFVVARGGRGGKGNAHFKTSTNQTPRFAQPGEEGEYKFLRLSLKLLADVGIVGLPNAGKSTLISKITDAHPKIAGYAFTTLSPNLGVVKRRGDIFRFTIADIPGIIEGASMGIGLGLSFLRHIERVKGILYLFDASSLDIEEDLKMLRNELSTYNPELLNRPYLIVLNKIDIWNDPEFTKDVIAKVSHLGKVVAISADQEVNLEELLENMDEVFFKNEIEKILNPIKDTKPISLDESDIFES.

The Obg domain maps to Glu2–Leu160. One can recognise an OBG-type G domain in the interval Ala161–Phe329. GTP-binding positions include Gly167–Ser174, Phe192–Ser196, Asp215–Gly218, Asn282–Asp285, and Ser310–Asp312. 2 residues coordinate Mg(2+): Ser174 and Thr194.

It belongs to the TRAFAC class OBG-HflX-like GTPase superfamily. OBG GTPase family. Monomer. Mg(2+) is required as a cofactor.

Its subcellular location is the cytoplasm. Its function is as follows. An essential GTPase which binds GTP, GDP and possibly (p)ppGpp with moderate affinity, with high nucleotide exchange rates and a fairly low GTP hydrolysis rate. Plays a role in control of the cell cycle, stress response, ribosome biogenesis and in those bacteria that undergo differentiation, in morphogenesis control. The polypeptide is GTPase Obg (Leptospira interrogans serogroup Icterohaemorrhagiae serovar copenhageni (strain Fiocruz L1-130)).